Reading from the N-terminus, the 426-residue chain is Protein FAM181B (426 aa).

2 disordered regions span residues 106 to 157 and 226 to 246; these read GLMG…AAAA and NLPP…CGPS. Low complexity predominate over residues 128 to 141; it reads PLAAPSAPTVAAPA.

Belongs to the FAM181 family.

The sequence is that of Protein FAM181B (FAM181B) from Homo sapiens (Human).